A 498-amino-acid polypeptide reads, in one-letter code: Elastase (498 aa).

A signal peptide spans 1–23 (MKKVSTLDLLFVAIMGVSPAAFA). Residues 24–197 (ADLIDVSKLP…VLDQWEGLAH (174 aa)) constitute a propeptide that is removed on maturation. An intrachain disulfide couples C227 to C255. Residue T236 is modified to Phosphothreonine. D333 provides a ligand contact to Ca(2+). H337 provides a ligand contact to Zn(2+). The active site involves E338. Zn(2+) is bound by residues H341 and E361. Ca(2+) is bound by residues E369, E372, D380, and L382. The active-site Proton donor is the H420. An intrachain disulfide couples C467 to C494.

This sequence belongs to the peptidase M4 family. The cofactor is Ca(2+). Requires Zn(2+) as cofactor. Made as a pre-pro-protein which is exported to the periplasm. Probably autocatalyzes cleavage of its pro-peptide. The pro-peptide can be secreted with mature elastase.

The protein localises to the secreted. It carries out the reaction Hydrolysis of proteins including elastin, collagen types III and IV, fibronectin and immunoglobulin A, generally with bulky hydrophobic group at P1'. Insulin B chain cleavage pattern identical to that of thermolysin, but specificity differs in other respects.. In terms of biological role, cleaves host elastase, collagen, IgI and several complement components as well as endogenous pro-aminopeptidase, pro-chitin-binding protein (cbpD). Cleaves its own pro-peptide. Involved in the pathogenesis of P.aeruginosa infections. This Pseudomonas aeruginosa (strain UCBPP-PA14) protein is Elastase (lasB).